A 741-amino-acid chain; its full sequence is uncharacterized protein (741 aa).

A coiled-coil region spans residues 64 to 103 (VETLLCMLEQLTIRIEFLTKEIAQQEAAYKDIQNTQKSLV). Residues 137–155 (FERQNRTAPLQSKVTTASL) are compositionally biased toward polar residues. 3 disordered regions span residues 137-214 (FERQ…TGLP), 280-318 (RTYSSISSSSSPFKKKTQSHLPNRTTEVPSISKQLSKSS), and 330-364 (SVSSVTKSPSPTPQSAPRAQSASTETAQDLDFLTP). 2 stretches are compositionally biased toward low complexity: residues 161–173 (RTSMSSSPTASRT) and 197–209 (KSKSVLPPSKSLA). Polar residues predominate over residues 298–308 (SHLPNRTTEVP). 2 stretches are compositionally biased toward low complexity: residues 309–318 (SISKQLSKSS) and 330–344 (SVSSVTKSPSPTPQS). The span at 346 to 356 (PRAQSASTETA) shows a compositional bias: polar residues. 499-506 (GPPGTGKT) is an ATP binding site.

It belongs to the AAA ATPase family.

The protein localises to the cytoplasm. Its subcellular location is the nucleus. This is an uncharacterized protein from Schizosaccharomyces pombe (strain 972 / ATCC 24843) (Fission yeast).